We begin with the raw amino-acid sequence, 463 residues long: Cysteine--tRNA ligase (463 aa).

C28 lines the Zn(2+) pocket. The 'HIGH' region signature appears at V30–H40. Zn(2+) contacts are provided by C209, H234, and E238. The 'KMSKS' region signature appears at K266 to S270. K269 contributes to the ATP binding site.

It belongs to the class-I aminoacyl-tRNA synthetase family. As to quaternary structure, monomer. Requires Zn(2+) as cofactor.

The protein resides in the cytoplasm. The enzyme catalyses tRNA(Cys) + L-cysteine + ATP = L-cysteinyl-tRNA(Cys) + AMP + diphosphate. The chain is Cysteine--tRNA ligase from Tolumonas auensis (strain DSM 9187 / NBRC 110442 / TA 4).